We begin with the raw amino-acid sequence, 458 residues long: UPF0210 protein Mevan_0738 (458 aa).

The protein belongs to the UPF0210 family.

The polypeptide is UPF0210 protein Mevan_0738 (Methanococcus vannielii (strain ATCC 35089 / DSM 1224 / JCM 13029 / OCM 148 / SB)).